Reading from the N-terminus, the 194-residue chain is Putative 3-methyladenine DNA glycosylase (194 aa).

It belongs to the DNA glycosylase MPG family.

The protein is Putative 3-methyladenine DNA glycosylase of Mycolicibacterium fortuitum (Mycobacterium fortuitum).